The sequence spans 106 residues: BLOC-1-related complex subunit 7 (106 aa).

This sequence belongs to the BORCS7 family. As to quaternary structure, component of the BLOC-one-related complex (BORC) which is composed of BLOC1S1, BLOC1S2, BORCS5, BORCS6, BORCS7, BORCS8, KXD1 and SNAPIN.

The protein resides in the lysosome membrane. As part of the BORC complex may play a role in lysosomes movement and localization at the cell periphery. Associated with the cytosolic face of lysosomes, the BORC complex may recruit ARL8B and couple lysosomes to microtubule plus-end-directed kinesin motor. The protein is BLOC-1-related complex subunit 7 of Pongo abelii (Sumatran orangutan).